The primary structure comprises 147 residues: Protein-export protein SecB 2 (147 aa).

It belongs to the SecB family. In terms of assembly, homotetramer, a dimer of dimers. One homotetramer interacts with 1 SecA dimer.

The protein localises to the cytoplasm. In terms of biological role, one of the proteins required for the normal export of preproteins out of the cell cytoplasm. It is a molecular chaperone that binds to a subset of precursor proteins, maintaining them in a translocation-competent state. It also specifically binds to its receptor SecA. The polypeptide is Protein-export protein SecB 2 (Francisella tularensis subsp. novicida (strain U112)).